Reading from the N-terminus, the 87-residue chain is Antitoxin epsilon (87 aa).

It belongs to the epsilon antitoxin family. In terms of assembly, in the presence of the zeta toxin, forms an inactive PezA(2)PezT(2) heterotetramer.

Antitoxin component of a type II toxin-antitoxin (TA) system. Neutralizes the toxic effect of cognate zeta toxin. Part of a postsegregational killing (PSK) system involved in the killing of plasmid-free cells. Continuous synthesis of the epsilon antitoxin is required to counteract the zeta toxin. This chain is Antitoxin epsilon, found in Lactococcus lactis subsp. lactis (Streptococcus lactis).